The following is a 463-amino-acid chain: 6-phosphofructo-2-kinase/fructose-2,6-bisphosphatase 3 (463 aa).

The segment at 1–246 (MPLELTQSRV…VYYLMNIHWQ (246 aa)) is 6-phosphofructo-2-kinase. An ATP-binding site is contributed by 42–50 (GLPARGKTY). Beta-D-fructose 6-phosphate-binding residues include arginine 75 and arginine 99. Aspartate 125 is an active-site residue. Residues threonine 127 and arginine 133 each contribute to the beta-D-fructose 6-phosphate site. Residue cysteine 155 is part of the active site. 164–169 (NIMEVK) contacts ATP. Residues lysine 169, arginine 191, and tyrosine 195 each contribute to the beta-D-fructose 6-phosphate site. Residues 247 to 463 (PRTIYLCRHG…PNPLMRSNSH (217 aa)) are fructose-2,6-bisphosphatase. Position 254 (arginine 254) interacts with beta-D-fructose 2,6-bisphosphate. Catalysis depends on histidine 255, which acts as the Tele-phosphohistidine intermediate. Positions 261 and 267 each coordinate beta-D-fructose 2,6-bisphosphate. Catalysis depends on glutamate 324, which acts as the Proton donor/acceptor. A beta-D-fructose 2,6-bisphosphate-binding site is contributed by tyrosine 335. 346 to 349 (YALA) contributes to the ATP binding site. Beta-D-fructose 2,6-bisphosphate is bound by residues lysine 353, tyrosine 364, and glutamine 390. ATP contacts are provided by residues 390 to 394 (QAVCV) and tyrosine 426. A disordered region spans residues 444-463 (RERSEDAKKGPNPLMRSNSH). Serine 462 carries the post-translational modification Phosphoserine; by AMPK and PKA.

It in the C-terminal section; belongs to the phosphoglycerate mutase family. As to quaternary structure, homodimer. Forms a heterodimer with PFKFB2. In terms of processing, phosphorylation by AMPK stimulates activity. In terms of tissue distribution, brain.

The enzyme catalyses beta-D-fructose 2,6-bisphosphate + H2O = beta-D-fructose 6-phosphate + phosphate. It carries out the reaction beta-D-fructose 6-phosphate + ATP = beta-D-fructose 2,6-bisphosphate + ADP + H(+). In terms of biological role, catalyzes both the synthesis and degradation of fructose 2,6-bisphosphate. The sequence is that of 6-phosphofructo-2-kinase/fructose-2,6-bisphosphatase 3 (PFKFB3) from Bos taurus (Bovine).